Reading from the N-terminus, the 622-residue chain is Zinc finger protein ZIC 5 (622 aa).

Disordered regions lie at residues 50–171, 190–223, 232–251, and 321–349; these read MHLH…KGHS, HGAP…SASG, GSAL…GHPL, and PGPH…HLPG. Residues 126–151 are compositionally biased toward pro residues; sequence APPPPAPPLPPSQSSSPPPPPPPPPA. A compositionally biased stretch (pro residues) spans 329 to 340; sequence APPPAPPPAPAP. The C2H2-type 1; degenerate zinc finger occupies 422-444; sequence EDCPREGKPFKAKYKLINHIRVH. C2H2-type zinc fingers lie at residues 450 to 474, 480 to 504, and 510 to 534; these read FPCP…KRTH, FKCE…SHVH, and YYCK…MKIH. 2 disordered regions span residues 531 to 573 and 590 to 622; these read MKIH…STLS and APSH…RTIH. Residues serine 537, serine 541, and serine 559 each carry the phosphoserine modification. Polar residues predominate over residues 595–604; sequence HTPSSNGTTS.

The protein belongs to the GLI C2H2-type zinc-finger protein family.

It is found in the nucleus. Its function is as follows. Essential for neural crest development, converting cells from an epidermal fate to a neural crest cell fate. Binds to DNA. The sequence is that of Zinc finger protein ZIC 5 (Zic5) from Mus musculus (Mouse).